The primary structure comprises 464 residues: MALTQFENDLEILRDMYPELEMKSVKVEEEGEFPQRINGKLLFKISLLADVNIEFGEQHMLLSNLSNECVEFTIYSCHYPDIRRCVVMDIKSLWISTDEKKMLIDKALRLVEETVDMSIEFADSFTSILILIFGFLIDDTAILLFPNGIRKCLTQDQYDLFKQISEEATLQKVSRSNYHCCICMEMEKGVRMIKLPCENANVEHYLCRGCAKSYFTAMIQENRISSVRCPQCEYKELKLEDFKSYKKMLKALFTPLIPVSFLKEVIDTELCERYEKMFYNQAATRLSKYCPYACVTCRRCDSWCTKEDLDDAMIQCQKCHFVFCFDCLHAWHGYNNKCGKKVSLSTDIIEEYLDDTVTSYERKRKLEAKYGRRVLELEVNDYLAEKMLDLAIKKEGSNLQRCPKCKVVVERSEGCNKMKCEVCGTLFCFICGVLLYPEDPYEHFREAYSGCYGRLFEGMPGTET.

The segment at 176–455 (SNYHCCICME…EAYSGCYGRL (280 aa)) is TRIAD supradomain. Residues Cys180, Cys183, Cys207, Cys210, Cys290, Cys300, Cys316, Cys319, Cys402, and Cys405 each contribute to the Zn(2+) site. The RING-type 1 zinc-finger motif lies at 180-236 (CCICMEMEKGVRMIKLPCENANVEHYLCRGCAKSYFTAMIQENRISSVRCPQCEYKE). An IBR-type zinc finger spans residues 267–338 (DTELCERYEK…HAWHGYNNKC (72 aa)). Residues 402 to 431 (CPKCKVVVERSEGCNKMKCEVCGTLFCFIC) form an RING-type 2; atypical zinc finger. Cys415 is a catalytic residue. Residues Cys420, Cys423, Cys428, Cys431, His443, and Cys451 each coordinate Zn(2+).

Belongs to the RBR family. RNF14 subfamily. Interacts with translation release factors eRF1 (SUP45) and eRF3 (SUP35) in vitro.

It catalyses the reaction [E2 ubiquitin-conjugating enzyme]-S-ubiquitinyl-L-cysteine + [acceptor protein]-L-lysine = [E2 ubiquitin-conjugating enzyme]-L-cysteine + [acceptor protein]-N(6)-ubiquitinyl-L-lysine.. It functions in the pathway protein modification; protein ubiquitination. Its function is as follows. E3 ubiquitin-protein ligase involved in translation quality control. Involved in the rescue of stalled ribosomes by promoting ubiquitination and degradation of proteins on stalled ribosomes. Specifically required to resolve RNA-protein cross-links caused by reactive aldehydes, which trigger translation stress by stalling ribosomes: acts by catalying 'Lys-6'-linked ubiquitination of RNA-protein cross-links, leading to their degradation. Interacts with the translation termination factors eRF1 (SUP45) and eRF3 (SUP35); overexpression decreases the efficiency of translation termination. In Saccharomyces cerevisiae (strain ATCC 204508 / S288c) (Baker's yeast), this protein is E3 ubiquitin-protein ligase ITT1.